A 574-amino-acid chain; its full sequence is Adenine deaminase (574 aa).

Belongs to the metallo-dependent hydrolases superfamily. Adenine deaminase family. Mn(2+) is required as a cofactor.

The enzyme catalyses adenine + H2O + H(+) = hypoxanthine + NH4(+). The chain is Adenine deaminase from Thermosipho africanus (strain TCF52B).